We begin with the raw amino-acid sequence, 263 residues long: NADH dehydrogenase [ubiquinone] iron-sulfur protein 3, mitochondrial (263 aa).

The transit peptide at 1 to 35 (MVAAVARLWWRGLLGASALTRGAGRPSVLLLPVRR) directs the protein to the mitochondrion.

It belongs to the complex I 30 kDa subunit family. Core subunit of respiratory chain NADH dehydrogenase (Complex I) which is composed of 45 different subunits. Interacts with NDUFAF3. Interacts with RAB5IF. Found in subcomplexes containing subunits NDUFS2, MT-ND1 and NDUFA13.

Its subcellular location is the mitochondrion inner membrane. The enzyme catalyses a ubiquinone + NADH + 5 H(+)(in) = a ubiquinol + NAD(+) + 4 H(+)(out). Its function is as follows. Core subunit of the mitochondrial membrane respiratory chain NADH dehydrogenase (Complex I) which catalyzes electron transfer from NADH through the respiratory chain, using ubiquinone as an electron acceptor. Essential for the catalytic activity and assembly of complex I. The protein is NADH dehydrogenase [ubiquinone] iron-sulfur protein 3, mitochondrial (NDUFS3) of Pongo pygmaeus (Bornean orangutan).